Consider the following 119-residue polypeptide: Ribonuclease P protein component (119 aa).

This sequence belongs to the RnpA family. Consists of a catalytic RNA component (M1 or rnpB) and a protein subunit.

It carries out the reaction Endonucleolytic cleavage of RNA, removing 5'-extranucleotides from tRNA precursor.. Functionally, RNaseP catalyzes the removal of the 5'-leader sequence from pre-tRNA to produce the mature 5'-terminus. It can also cleave other RNA substrates such as 4.5S RNA. The protein component plays an auxiliary but essential role in vivo by binding to the 5'-leader sequence and broadening the substrate specificity of the ribozyme. In Yersinia enterocolitica serotype O:8 / biotype 1B (strain NCTC 13174 / 8081), this protein is Ribonuclease P protein component.